Consider the following 803-residue polypeptide: MLQNVTPHNKLPGEGNAGLLGLGPEAAAPGKRIRKPSLLYEGFESPTMASVPALQLTPANPPPPEVSNPKKPGRVTNQLQYLHKVVMKALWKHQFAWPFRQPVDAVKLGLPDYHKIIKQPMDMGTIKRRLENNYYWAASECMQDFNTMFTNCYIYNKPTDDIVLMAQTLEKIFLQKVASMPQEEQELVVTIPKNSHKKGAKLAALQGSITSAHQVPAVSSVSHTALYTPPPEIPTTVLNIPHPSVISSPLLKSLHSAGPPLLAVSAAPPAQPLAKKKGVKRKADTTTPTPTAILAPGSPASPPGGLEPKAARLPPVRRESGRPIKPPRKDLPDSQQQHQSSKKGKLSEQLKHCNGILKELLSKKHAAYAWPFYKPVDASALGLHDYHDIIKHPMDLSTVKRKMENRDYRDAQEFAADVRLMFSNCYKYNPPDHDVVAMARKLQDVFEFRYAKMPDEPLEPGPLPVSTALPPGLAKSSSESSSEESSSESSSEEEEEEDEDEEEEEEESESSDSEEERAHRLAELQEQLRAVHEQLAALSQGPISKPKRKREKKEKKKKRKAEKHRGRAGADEDDKGPRAPRPSQPKKSKKAGGGGSSGAATLGPPGFGPSGGGATKLPKKATKTAPPALPAGYDSEEEEESRPMSYDEKRQLSLDINKLPGEKLGRVVHIIQAREPSLRDSNPEEIEIDFETLKPSTLRELERYVLSCLRKKPRKPYTIKKPVGKTKEELALEKKRELEKRLQDVSGQLNSTKKPPKKASEKTETSSAQQVAVSRLSASSSSSDSSSSSSSSSSSDTSDSDSG.

An N-acetylmethionine modification is found at Met1. The residue at position 6 (Thr6) is a Phosphothreonine. Ser37 carries the phosphoserine modification. The tract at residues 53 to 73 (ALQLTPANPPPPEVSNPKKPG) is disordered. One can recognise a Bromo 1 domain in the interval 74 to 180 (RVTNQLQYLH…KIFLQKVASM (107 aa)). A protein contacts are provided by Asp112, Tyr155, Asn156, Lys157, Asp160, and Asp161. Disordered stretches follow at residues 268 to 348 (PPAQ…KLSE), 456 to 652 (EPLE…KRQL), and 739 to 803 (EKRL…SDSG). Residues 285-298 (TTTPTPTAILAPGS) show a composition bias toward low complexity. Ser298 and Ser301 each carry phosphoserine. The span at 316–332 (VRRESGRPIKPPRKDLP) shows a compositional bias: basic and acidic residues. A Bromo 2 domain is found at 344 to 453 (GKLSEQLKHC…DVFEFRYAKM (110 aa)). Over residues 481–515 (SSEESSSESSSEEEEEEDEDEEEEEEESESSDSEE) the composition is skewed to acidic residues. Basic residues predominate over residues 545–567 (KPKRKREKKEKKKKRKAEKHRGR). Residues 556 to 560 (KKKRK) carry the Nuclear localization signal motif. A compositionally biased stretch (low complexity) spans 623–632 (KTAPPALPAG). Residues 634-716 (DSEEEEESRP…SCLRKKPRKP (83 aa)) form the NET domain. Ser635 carries the phosphoserine modification. Positions 641–652 (SRPMSYDEKRQL) are enriched in basic and acidic residues. Over residues 777–797 (SASSSSSDSSSSSSSSSSSDT) the composition is skewed to low complexity.

Belongs to the BET family. Homodimer. Interacts with E2F1. Interacts with (acetylated) STAT3; promoting STAT3 recruitment to chromatin. Interacts with CTCF; promoting BRD2 recruitment to chromatin.

The protein resides in the nucleus. The protein localises to the chromosome. Chromatin reader protein that specifically recognizes and binds histone H4 acetylated at 'Lys-5' and 'Lys-12' (H4K5ac and H4K12ac, respectively), thereby controlling gene expression and remodeling chromatin structures. Recruits transcription factors and coactivators to target gene sites, and activates RNA polymerase II machinery for transcriptional elongation. Plays a key role in genome compartmentalization via its association with CTCF and cohesin: recruited to chromatin by CTCF and promotes formation of topologically associating domains (TADs) via its ability to bind acetylated histones, contributing to CTCF boundary formation and enhancer insulation. Also recognizes and binds acetylated non-histone proteins, such as STAT3. Involved in inflammatory response by regulating differentiation of naive CD4(+) T-cells into T-helper Th17: recognizes and binds STAT3 acetylated at 'Lys-87', promoting STAT3 recruitment to chromatin. In addition to acetylated lysines, also recognizes and binds lysine residues on histones that are both methylated and acetylated on the same side chain to form N6-acetyl-N6-methyllysine (Kacme), an epigenetic mark of active chromatin associated with increased transcriptional initiation. Specifically binds histone H4 acetyl-methylated at 'Lys-5' and 'Lys-12' (H4K5acme and H4K12acme, respectively). The sequence is that of Bromodomain-containing protein 2 (BRD2) from Bos taurus (Bovine).